Consider the following 80-residue polypeptide: uncharacterized protein (80 aa).

Residues 10 to 29 (FVAREYPLVVVPFIYFVLFL) form a helical membrane-spanning segment.

It is found in the membrane. This is an uncharacterized protein from Saccharomyces cerevisiae (strain ATCC 204508 / S288c) (Baker's yeast).